The primary structure comprises 319 residues: Probable NAD(P)H-dependent D-xylose reductase xyl1 (319 aa).

An N-linked (GlcNAc...) asparagine glycan is attached at Asn-26. Tyr-50 acts as the Proton donor in catalysis. Residue His-112 participates in substrate binding. Residues Asn-141 and Asn-167 are each glycosylated (N-linked (GlcNAc...) asparagine). Residues 166 to 167 (SN), 215 to 224 (SSFGPLSFLE), and 271 to 281 (KSNNPQRLKQN) contribute to the NAD(+) site.

This sequence belongs to the aldo/keto reductase family.

The enzyme catalyses xylitol + NAD(+) = D-xylose + NADH + H(+). It carries out the reaction xylitol + NADP(+) = D-xylose + NADPH + H(+). The protein operates within carbohydrate metabolism; D-xylose degradation. Catalyzes the initial reaction in the xylose utilization pathway by reducing D-xylose into xylitol. Xylose is a major component of hemicelluloses such as xylan. Most fungi utilize D-xylose via three enzymatic reactions, xylose reductase (XR), xylitol dehydrogenase (XDH), and xylulokinase, to form xylulose 5-phosphate, which enters pentose phosphate pathway. The sequence is that of Probable NAD(P)H-dependent D-xylose reductase xyl1 (xyl1) from Aspergillus niger (strain ATCC MYA-4892 / CBS 513.88 / FGSC A1513).